The sequence spans 201 residues: MIAYLSGVVREVREGSAVVVAGGVGYEVQCPAGMLARLKPGEAAEFSTRFIVREDAQLLFGFPDADHLKLFDLLTSVSGVGPKLGLALLSAMPVSALAAGLIGGDVKLLSSVSGVGKKTAERLALELSSKVPEHLAAAASGAAGGKRPARVSSTAGHDAVDALLALGFREAQVRAAVAELLGADPEASADTLIRKALGRLR.

The tract at residues 1 to 63 is domain I; it reads MIAYLSGVVR…EDAQLLFGFP (63 aa). Positions 64 to 142 are domain II; that stretch reads DADHLKLFDL…EHLAAAASGA (79 aa). The segment at 143-150 is flexible linker; the sequence is AGGKRPAR. The tract at residues 151–201 is domain III; that stretch reads VSSTAGHDAVDALLALGFREAQVRAAVAELLGADPEASADTLIRKALGRLR.

It belongs to the RuvA family. As to quaternary structure, homotetramer. Forms an RuvA(8)-RuvB(12)-Holliday junction (HJ) complex. HJ DNA is sandwiched between 2 RuvA tetramers; dsDNA enters through RuvA and exits via RuvB. An RuvB hexamer assembles on each DNA strand where it exits the tetramer. Each RuvB hexamer is contacted by two RuvA subunits (via domain III) on 2 adjacent RuvB subunits; this complex drives branch migration. In the full resolvosome a probable DNA-RuvA(4)-RuvB(12)-RuvC(2) complex forms which resolves the HJ.

The protein resides in the cytoplasm. In terms of biological role, the RuvA-RuvB-RuvC complex processes Holliday junction (HJ) DNA during genetic recombination and DNA repair, while the RuvA-RuvB complex plays an important role in the rescue of blocked DNA replication forks via replication fork reversal (RFR). RuvA specifically binds to HJ cruciform DNA, conferring on it an open structure. The RuvB hexamer acts as an ATP-dependent pump, pulling dsDNA into and through the RuvAB complex. HJ branch migration allows RuvC to scan DNA until it finds its consensus sequence, where it cleaves and resolves the cruciform DNA. The protein is Holliday junction branch migration complex subunit RuvA of Deinococcus radiodurans (strain ATCC 13939 / DSM 20539 / JCM 16871 / CCUG 27074 / LMG 4051 / NBRC 15346 / NCIMB 9279 / VKM B-1422 / R1).